The following is a 433-amino-acid chain: Myricetin 3-O-glucosyl 1,2-rhamnoside 6'-O-caffeoyltransferase AT1 (433 aa).

Catalysis depends on proton acceptor residues histidine 157 and aspartate 375.

Belongs to the plant acyltransferase family. As to expression, expressed in young cromes.

The enzyme catalyses myricetin 3-O-[beta-D-glucosyl-(1-&gt;2)-alpha-L-rhamnoside] + (E)-caffeoyl-CoA = myricetin 3-O-[(6-O-(E)-caffeoyl-beta-D-glucosyl)-(1-&gt;2)-alpha-L-rhamnoside] + CoA. The protein operates within flavonoid metabolism. Functionally, caffeoyltransferase involved in montbretin A (MbA) biosynthesis. Catalyzes the caffeoylation of myricetin 3-O-beta-D-glucosyl 1,2-alpha-L-rhamnoside (MRG) to produce myricetin 3-O-(6'-O-caffeoyl)-beta-D-glucosyl 1,2-alpha-L-rhamnoside (mini-MbA), a precursor of MbA. Mini-MbA and MbA are potent inhibitors of human pancreatic alpha-amylase and are being developed as drug candidates to treat type-2 diabetes. In vitro, is able to catalyze the caffeoylation of quercetin 3-O-sophoroside (QGG), although QGG may not be a physiological substrate in vivo. In vitro, can use coumaryl-CoA, feruloyl-CoA and acetyl-CoA, although these three acyl donors may not be physiological in vivo. The sequence is that of Myricetin 3-O-glucosyl 1,2-rhamnoside 6'-O-caffeoyltransferase AT1 from Crocosmia x crocosmiiflora (Montbretia).